The primary structure comprises 334 residues: MSTVQEKLITNVCQDKAAKPTNKITIVGVGQVGMACAVSVLLKELADELALVDILEDKLKGEVMDLQHGSLFLKTPTIVADKDYSVTANSRIVVVTGGVPQQEGESRLNLVQRNVNVFKFIIPQVVKYSPDCIIIVVSNPVDILTYVTWKLSGLPQHRIIGSGTNLDSARFRHLISEKLGVHPSSCHGFILGEHGDTSVAVWSGVNVAGVSLQSLKPEIGTDQDSCNWKEVHKKVVDSAYEVIKLKGYTNWAIGFSVAEIVESITKNLGRVHPVSTMVKGMYGIETEVFLSLPCVLNGNGLTSVINQKLKDDEVGQLQKSAETLWGIQKDLKDL.

30-58 (GQVGMACAVSVLLKELADELALVDILEDK) is a binding site for NAD(+). Substrate contacts are provided by Arg107, Asn139, and Arg170. Asn139 lines the NAD(+) pocket. His194 serves as the catalytic Proton acceptor. A substrate-binding site is contributed by Thr249.

The protein belongs to the LDH/MDH superfamily. LDH family. Homotetramer.

The protein resides in the cytoplasm. It carries out the reaction (S)-lactate + NAD(+) = pyruvate + NADH + H(+). Its pathway is fermentation; pyruvate fermentation to lactate; (S)-lactate from pyruvate: step 1/1. In terms of biological role, interconverts simultaneously and stereospecifically pyruvate and lactate with concomitant interconversion of NADH and NAD(+). This chain is L-lactate dehydrogenase B chain (ldhb), found in Xenopus laevis (African clawed frog).